The following is a 146-amino-acid chain: Hemoglobin subunit beta (146 aa).

Positions 2 to 146 (HWSAEEKQLI…VAHALARKYH (145 aa)) constitute a Globin domain. Heme b is bound by residues H63 and H92.

The protein belongs to the globin family. Heterotetramer of two alpha chains and two beta chains. In terms of tissue distribution, red blood cells.

Involved in oxygen transport from the lung to the various peripheral tissues. In Anseranas semipalmata (Magpie goose), this protein is Hemoglobin subunit beta (HBB).